The primary structure comprises 902 residues: HTH-type transcriptional regulator MalT (902 aa).

39–46 (SPAGYGKT) is a binding site for ATP. Positions 832 to 897 (ELVRTSPLTQ…EAVQTAEQLL (66 aa)) constitute an HTH luxR-type domain. The H-T-H motif DNA-binding region spans 856 to 875 (NEQIAHELDVAGTTIKTHIR).

The protein belongs to the MalT family. Monomer in solution. Oligomerizes to an active state in the presence of the positive effectors ATP and maltotriose.

Activated by ATP and maltotriose, which are both required for DNA binding. In terms of biological role, positively regulates the transcription of the maltose regulon whose gene products are responsible for uptake and catabolism of malto-oligosaccharides. Specifically binds to the promoter region of its target genes, recognizing a short DNA motif called the MalT box. This Vibrio cholerae serotype O1 (strain ATCC 39315 / El Tor Inaba N16961) protein is HTH-type transcriptional regulator MalT.